The chain runs to 153 residues: Pheromone-binding protein Gp-9 (153 aa).

An N-terminal signal peptide occupies residues 1–19 (MKTFVLHIFIFAFVAFASA). 3 disulfide bridges follow: cysteine 37–cysteine 77, cysteine 73–cysteine 129, and cysteine 118–cysteine 138.

The protein belongs to the PBP/GOBP family. In terms of assembly, homodimer.

Its subcellular location is the secreted. Colony queen number, a major feature of social organization, is associated with worker genotype for Gp-9. Colonies are headed by either a single reproductive queen (monogyne form) or multiple queens (polygyne form). Differences in worker Gp-9 genotypes between social forms may cause differences in workers' abilities to recognize queens and regulate their numbers. This Solenopsis geminata (Tropical fire ant) protein is Pheromone-binding protein Gp-9.